Consider the following 286-residue polypeptide: Polyamine aminopropyltransferase (286 aa).

A PABS domain is found at 5-238; sequence KTWHEKLYCH…GVMVFAWGTN (234 aa). Spermidine contacts are provided by H64 and D88. Residues E108 and 140–141 contribute to the S-methyl-5'-thioadenosine site; that span reads DG. D158 acts as the Proton acceptor in catalysis. Spermidine is bound at residue 158–161; that stretch reads DSTD.

Belongs to the spermidine/spermine synthase family. As to quaternary structure, homodimer or homotetramer.

The protein localises to the cytoplasm. It carries out the reaction S-adenosyl 3-(methylsulfanyl)propylamine + putrescine = S-methyl-5'-thioadenosine + spermidine + H(+). It functions in the pathway amine and polyamine biosynthesis; spermidine biosynthesis; spermidine from putrescine: step 1/1. Its function is as follows. Catalyzes the irreversible transfer of a propylamine group from the amino donor S-adenosylmethioninamine (decarboxy-AdoMet) to putrescine (1,4-diaminobutane) to yield spermidine. The protein is Polyamine aminopropyltransferase of Buchnera aphidicola subsp. Acyrthosiphon pisum (strain 5A).